The chain runs to 101 residues: Small ribosomal subunit protein uS14 (101 aa).

This sequence belongs to the universal ribosomal protein uS14 family. In terms of assembly, part of the 30S ribosomal subunit. Contacts proteins S3 and S10.

Binds 16S rRNA, required for the assembly of 30S particles and may also be responsible for determining the conformation of the 16S rRNA at the A site. The chain is Small ribosomal subunit protein uS14 from Delftia acidovorans (strain DSM 14801 / SPH-1).